A 164-amino-acid chain; its full sequence is Sorting nexin-3 (164 aa).

Residues 1 to 26 (MSGKREFKSFGSTEETMFSQHHKIPS) form a disordered region. Residues 10-26 (FGSTEETMFSQHHKIPS) are compositionally biased toward polar residues. Positions 40–163 (IEVRNPKTHV…IRFIEDDKFV (124 aa)) constitute a PX domain. A 1,2-diacyl-sn-glycero-3-phospho-(1D-myo-inositol-3-phosphate)-binding residues include Arg83, Ser85, Lys114, Arg120, and Arg129.

The protein belongs to the sorting nexin family.

It is found in the cytoplasm. The protein localises to the golgi apparatus membrane. The protein resides in the prevacuolar compartment membrane. In terms of biological role, required for retention of late Golgi membrane proteins. Component of the retrieval machinery that functions by direct interaction with the cytosolic tails of certain TGN membrane proteins during the sorting/budding process at the prevacuolar compartment. Binds phosphatidylinositol 3-phosphate (PtdIns(P3)). The protein is Sorting nexin-3 (SNX3) of Candida glabrata (strain ATCC 2001 / BCRC 20586 / JCM 3761 / NBRC 0622 / NRRL Y-65 / CBS 138) (Yeast).